Consider the following 99-residue polypeptide: uncharacterized protein (99 aa).

The disordered stretch occupies residues 1-99; it reads MSDFPPSYQQ…KYHSKSDVGF (99 aa). A compositionally biased stretch (polar residues) spans 19–29; it reads QESSTSNNASE.

This is an uncharacterized protein from Schizosaccharomyces pombe (strain 972 / ATCC 24843) (Fission yeast).